We begin with the raw amino-acid sequence, 106 residues long: Hydrogenase expression/formation protein HoxL (106 aa).

This sequence belongs to the HupF/HypC family.

The sequence is that of Hydrogenase expression/formation protein HoxL (hoxL) from Azotobacter vinelandii.